Reading from the N-terminus, the 171-residue chain is Peptide deformylase (171 aa).

Residues C91 and H133 each coordinate Fe cation. The active site involves E134. H137 serves as a coordination point for Fe cation.

Belongs to the polypeptide deformylase family. Fe(2+) serves as cofactor.

It carries out the reaction N-terminal N-formyl-L-methionyl-[peptide] + H2O = N-terminal L-methionyl-[peptide] + formate. Functionally, removes the formyl group from the N-terminal Met of newly synthesized proteins. Requires at least a dipeptide for an efficient rate of reaction. N-terminal L-methionine is a prerequisite for activity but the enzyme has broad specificity at other positions. This chain is Peptide deformylase, found in Mannheimia succiniciproducens (strain KCTC 0769BP / MBEL55E).